We begin with the raw amino-acid sequence, 388 residues long: Succinate--CoA ligase [ADP-forming] subunit beta (388 aa).

Residues 9-244 (KALFAEYGLP…PSQDDAREAH (236 aa)) enclose the ATP-grasp domain. ATP contacts are provided by residues Lys-46, 53–55 (GRG), Glu-99, Thr-102, and Glu-107. Asn-199 and Asp-213 together coordinate Mg(2+). Substrate contacts are provided by residues Asn-264 and 321–323 (GIV).

Belongs to the succinate/malate CoA ligase beta subunit family. Heterotetramer of two alpha and two beta subunits. The cofactor is Mg(2+).

The enzyme catalyses succinate + ATP + CoA = succinyl-CoA + ADP + phosphate. The catalysed reaction is GTP + succinate + CoA = succinyl-CoA + GDP + phosphate. The protein operates within carbohydrate metabolism; tricarboxylic acid cycle; succinate from succinyl-CoA (ligase route): step 1/1. In terms of biological role, succinyl-CoA synthetase functions in the citric acid cycle (TCA), coupling the hydrolysis of succinyl-CoA to the synthesis of either ATP or GTP and thus represents the only step of substrate-level phosphorylation in the TCA. The beta subunit provides nucleotide specificity of the enzyme and binds the substrate succinate, while the binding sites for coenzyme A and phosphate are found in the alpha subunit. The chain is Succinate--CoA ligase [ADP-forming] subunit beta from Shewanella halifaxensis (strain HAW-EB4).